Consider the following 37-residue polypeptide: Large ribosomal subunit protein bL36 (37 aa).

This sequence belongs to the bacterial ribosomal protein bL36 family.

This is Large ribosomal subunit protein bL36 from Mycoplasma genitalium (strain ATCC 33530 / DSM 19775 / NCTC 10195 / G37) (Mycoplasmoides genitalium).